Here is a 336-residue protein sequence, read N- to C-terminus: Probable carboxylesterase 6 (336 aa).

Residues 1–20 (MGGTKLTHVTTTNPNNSNIH) form a disordered region. A compositionally biased stretch (polar residues) spans 7–19 (THVTTTNPNNSNI). Residues 96–98 (HGG) carry the Involved in the stabilization of the negatively charged intermediate by the formation of the oxyanion hole motif. Residues S176, D276, and H303 contribute to the active site.

Belongs to the 'GDXG' lipolytic enzyme family. In terms of tissue distribution, expressed in roots, leaves, flowers and siliques.

It carries out the reaction a carboxylic ester + H2O = an alcohol + a carboxylate + H(+). In terms of biological role, carboxylesterase acting on esters with varying acyl chain length. This Arabidopsis thaliana (Mouse-ear cress) protein is Probable carboxylesterase 6 (CXE6).